The sequence spans 450 residues: tRNA-2-methylthio-N(6)-dimethylallyladenosine synthase (450 aa).

Residues 3 to 118 (KKVFIKTFGC…LPELLQQRER (116 aa)) form the MTTase N-terminal domain. Cys12, Cys49, Cys81, Cys155, Cys159, and Cys162 together coordinate [4Fe-4S] cluster. In terms of domain architecture, Radical SAM core spans 141-376 (SVQGASAFVS…VIDTHIRSIS (236 aa)). Residues 377 to 440 (ASRVGTVQRI…AYTLRGQYCA (64 aa)) enclose the TRAM domain.

It belongs to the methylthiotransferase family. MiaB subfamily. Monomer. Requires [4Fe-4S] cluster as cofactor.

It is found in the cytoplasm. It catalyses the reaction N(6)-dimethylallyladenosine(37) in tRNA + (sulfur carrier)-SH + AH2 + 2 S-adenosyl-L-methionine = 2-methylsulfanyl-N(6)-dimethylallyladenosine(37) in tRNA + (sulfur carrier)-H + 5'-deoxyadenosine + L-methionine + A + S-adenosyl-L-homocysteine + 2 H(+). Catalyzes the methylthiolation of N6-(dimethylallyl)adenosine (i(6)A), leading to the formation of 2-methylthio-N6-(dimethylallyl)adenosine (ms(2)i(6)A) at position 37 in tRNAs that read codons beginning with uridine. The polypeptide is tRNA-2-methylthio-N(6)-dimethylallyladenosine synthase (Verminephrobacter eiseniae (strain EF01-2)).